The following is a 205-amino-acid chain: MSTATTTSTPAQNVDLSKHPSGIIPTLQNIVSTVNMATELDLKAIALGARNAEYNPKRFAAVIMRIREPKTTALIFKSGKMVCTGAKSEDASRFAARKYARIIQKLDFPARFTDFKIQNIVGSCDVKFPIKLELLHNAHTSFTNYEPEIFPGLIYKMIQPKVVLLIFVSGKIVLTGAKVREEIYEAFENIYPVLSAFKKVNAITQ.

2 tandem repeats follow at residues leucine 27–isoleucine 103 and isoleucine 117–leucine 194.

The protein belongs to the TBP family. As to quaternary structure, belongs to the TFIID complex together with the TBP-associated factors (TAFs). Binds DNA as monomer.

The protein resides in the nucleus. Functionally, general transcription factor that functions at the core of the DNA-binding multiprotein factor TFIID. Binding of TFIID to the TATA box is the initial transcriptional step of the pre-initiation complex (PIC), playing a role in the activation of eukaryotic genes transcribed by RNA polymerase II. This Dictyostelium discoideum (Social amoeba) protein is TATA-box-binding protein (tbpA).